A 211-amino-acid chain; its full sequence is Uracil phosphoribosyltransferase (211 aa).

5-phospho-alpha-D-ribose 1-diphosphate-binding positions include R78, R103, and 130–138 (DPMLATGGT). Residues I195 and 200–202 (GDA) each bind uracil. D201 provides a ligand contact to 5-phospho-alpha-D-ribose 1-diphosphate.

Belongs to the UPRTase family. Requires Mg(2+) as cofactor.

The enzyme catalyses UMP + diphosphate = 5-phospho-alpha-D-ribose 1-diphosphate + uracil. Its pathway is pyrimidine metabolism; UMP biosynthesis via salvage pathway; UMP from uracil: step 1/1. Its activity is regulated as follows. Allosterically activated by GTP. Catalyzes the conversion of uracil and 5-phospho-alpha-D-ribose 1-diphosphate (PRPP) to UMP and diphosphate. The polypeptide is Uracil phosphoribosyltransferase (Streptomyces avermitilis (strain ATCC 31267 / DSM 46492 / JCM 5070 / NBRC 14893 / NCIMB 12804 / NRRL 8165 / MA-4680)).